A 484-amino-acid chain; its full sequence is Antibiotic efflux pump outer membrane protein ArpC (484 aa).

Residues 1-17 (MTKSLLSLAVTAFILGG) form the signal peptide. C18 is lipidated: N-palmitoyl cysteine. Residue C18 is the site of S-diacylglycerol cysteine attachment.

Belongs to the outer membrane factor (OMF) (TC 1.B.17) family.

Its subcellular location is the cell outer membrane. Functionally, the outer membrane component of an antibiotic efflux pump. Confers resistance to numerous structurally unrelated antibiotics such as carbenicillin, chloramphenicol, erythromycin, novobiocin, streptomycin and tetracycline. Is not involved in organic solvent efflux. The sequence is that of Antibiotic efflux pump outer membrane protein ArpC (arpC) from Pseudomonas putida (Arthrobacter siderocapsulatus).